The following is a 538-amino-acid chain: Syncytin-2 (538 aa).

An N-terminal signal peptide occupies residues 1–15 (MGLLLLVLILTPLLA). Residues 16–478 (AHRHPDFPLL…GWLNWEGTWK (463 aa)) are Extracellular-facing. Positions 43–46 (CWLC) match the CXXC motif. Intrachain disulfides connect cysteine 43/cysteine 46, cysteine 43/cysteine 439, and cysteine 431/cysteine 438. N-linked (GlcNAc...) asparagine glycosylation is found at asparagine 133, asparagine 146, asparagine 177, asparagine 220, asparagine 241, asparagine 247, asparagine 312, and asparagine 332. Residues 354 to 374 (FIPLLAGLGIIAGTGTGIAGI) are fusion peptide. Positions 414 to 430 (LQNRRGLDMLTAAQGGI) match the CKS-17 motif. The CX6CC motif lies at 431–439 (CLALDEKCC). N-linked (GlcNAc...) asparagine glycosylation is present at asparagine 443. A helical transmembrane segment spans residues 479-499 (WFSWVLPFTGPLVSLLLLLLF). Residues 500–538 (GPCLLNLITQFVLSRLQAIKLQTNLSAGCRPHNIQESPF) lie on the Cytoplasmic side of the membrane.

The protein belongs to the gamma type-C retroviral envelope protein family. HERV class-I FRD env subfamily. The surface and transmembrane proteins form a heterodimer. They are attached by non-covalent interactions or by a labile interchain disulfide bond. Specific enzymatic cleavages in vivo yield the mature SU and TM proteins. In terms of processing, the CXXC motif is highly conserved across a broad range of retroviral envelope proteins. It is thought to participate in the formation of a labile disulfide bond possibly with the CX6CC motif present in the transmembrane protein.

Its subcellular location is the virion. The protein localises to the cell membrane. This endogenous retroviral envelope protein has retained its original fusogenic properties and participates in trophoblast fusion and the formation of a syncytium during placenta morphogenesis. The interaction with MFSD2A is apparently important for this process. In terms of biological role, endogenous envelope proteins may have kept, lost or modified their original function during evolution but this one can still make pseudotypes with MLV, HIV-1 or SIV-1 virions and confer infectivity. Retroviral envelope proteins mediate receptor recognition and membrane fusion during early infection. The surface protein mediates receptor recognition, while the transmembrane protein anchors the envelope heterodimer to the viral membrane through one transmembrane domain. The other hydrophobic domain, called fusion peptide, mediates fusion of the viral membrane with the target cell membrane. This chain is Syncytin-2 (ERVFRD-1), found in Pongo pygmaeus (Bornean orangutan).